The following is a 312-amino-acid chain: Acetyl-coenzyme A carboxylase carboxyl transferase subunit beta (312 aa).

A disordered region spans residues 1–52 (MEMDTAVENPAVEKNGQPTPSSTSTATDAAPTPNAPNRPAPNTAGNRKRGVP). Positions 18–32 (PTPSSTSTATDAAPT) are enriched in low complexity. The CoA carboxyltransferase N-terminal domain occupies 55–312 (VWRKCDSCGA…IATAIDYCGK (258 aa)). C59, C62, C78, and C81 together coordinate Zn(2+). The segment at 59 to 81 (CDSCGASLFYKEVQQRLNVCPQC) adopts a C4-type zinc-finger fold.

Belongs to the AccD/PCCB family. Acetyl-CoA carboxylase is a heterohexamer composed of biotin carboxyl carrier protein (AccB), biotin carboxylase (AccC) and two subunits each of ACCase subunit alpha (AccA) and ACCase subunit beta (AccD). The cofactor is Zn(2+).

It is found in the cytoplasm. It catalyses the reaction N(6)-carboxybiotinyl-L-lysyl-[protein] + acetyl-CoA = N(6)-biotinyl-L-lysyl-[protein] + malonyl-CoA. The protein operates within lipid metabolism; malonyl-CoA biosynthesis; malonyl-CoA from acetyl-CoA: step 1/1. Functionally, component of the acetyl coenzyme A carboxylase (ACC) complex. Biotin carboxylase (BC) catalyzes the carboxylation of biotin on its carrier protein (BCCP) and then the CO(2) group is transferred by the transcarboxylase to acetyl-CoA to form malonyl-CoA. The chain is Acetyl-coenzyme A carboxylase carboxyl transferase subunit beta from Rhodopirellula baltica (strain DSM 10527 / NCIMB 13988 / SH1).